A 432-amino-acid chain; its full sequence is 5-methylthioadenosine/S-adenosylhomocysteine deaminase (432 aa).

The Zn(2+) site is built by His-62 and His-64. Substrate is bound by residues Glu-91 and His-184. Position 211 (His-211) interacts with Zn(2+). Residues Glu-214 and Asp-299 each contribute to the substrate site. Position 299 (Asp-299) interacts with Zn(2+).

The protein belongs to the metallo-dependent hydrolases superfamily. MTA/SAH deaminase family. Zn(2+) serves as cofactor.

It carries out the reaction S-adenosyl-L-homocysteine + H2O + H(+) = S-inosyl-L-homocysteine + NH4(+). The catalysed reaction is S-methyl-5'-thioadenosine + H2O + H(+) = S-methyl-5'-thioinosine + NH4(+). Functionally, catalyzes the deamination of 5-methylthioadenosine and S-adenosyl-L-homocysteine into 5-methylthioinosine and S-inosyl-L-homocysteine, respectively. Is also able to deaminate adenosine. This Haloarcula marismortui (strain ATCC 43049 / DSM 3752 / JCM 8966 / VKM B-1809) (Halobacterium marismortui) protein is 5-methylthioadenosine/S-adenosylhomocysteine deaminase.